Reading from the N-terminus, the 273-residue chain is MPELPEVQLAADSLGVQIVGARIVRVERLDWTRMVETPSPDEFITLLAGRQVHGWGRRAKWILLFLDGGWTLALHLRMSGSLTVQPADAPPDKHTHLVLRLDDGRQVFFRDPRKFGRARLLDADGRAALDAAHGDEPLSNAFTVERLAELLRGRKRAIKPLLLDQAVIAGIGNIYADEALWRARIHPLRPASDLSADEVAALHDGIRAALRQALTNGGSTLRDYRNSYGTRGTNQDHFNAYDREGQPCPRCGATIIKTVVAQRGTHYCPECQR.

Pro-2 acts as the Schiff-base intermediate with DNA in catalysis. Glu-3 (proton donor) is an active-site residue. Lys-60 serves as the catalytic Proton donor; for beta-elimination activity. DNA-binding residues include His-94, Arg-113, and Arg-154. An FPG-type zinc finger spans residues 239 to 273 (NAYDREGQPCPRCGATIIKTVVAQRGTHYCPECQR). The active-site Proton donor; for delta-elimination activity is the Arg-263.

The protein belongs to the FPG family. Monomer. The cofactor is Zn(2+).

It catalyses the reaction Hydrolysis of DNA containing ring-opened 7-methylguanine residues, releasing 2,6-diamino-4-hydroxy-5-(N-methyl)formamidopyrimidine.. The enzyme catalyses 2'-deoxyribonucleotide-(2'-deoxyribose 5'-phosphate)-2'-deoxyribonucleotide-DNA = a 3'-end 2'-deoxyribonucleotide-(2,3-dehydro-2,3-deoxyribose 5'-phosphate)-DNA + a 5'-end 5'-phospho-2'-deoxyribonucleoside-DNA + H(+). Involved in base excision repair of DNA damaged by oxidation or by mutagenic agents. Acts as a DNA glycosylase that recognizes and removes damaged bases. Has a preference for oxidized purines, such as 7,8-dihydro-8-oxoguanine (8-oxoG). Has AP (apurinic/apyrimidinic) lyase activity and introduces nicks in the DNA strand. Cleaves the DNA backbone by beta-delta elimination to generate a single-strand break at the site of the removed base with both 3'- and 5'-phosphates. The protein is Formamidopyrimidine-DNA glycosylase of Roseiflexus sp. (strain RS-1).